Here is a 488-residue protein sequence, read N- to C-terminus: Protein DETOXIFICATION 35 (488 aa).

12 helical membrane-spanning segments follow: residues 38–58 (LWMI…VSSV), 73–93 (AVSI…LGMG), 121–141 (IILF…TPVL), 150–170 (IAVP…SLAF), 187–207 (IAWI…LFII), 218–238 (LAFN…VIGW), 262–282 (IASA…IVLT), 296–316 (SICM…NAAI), 336–356 (VYVT…AIII), 379–401 (AYLL…VAVG), 408–428 (VAYI…YLLG), and 439–459 (WSGM…VLYK).

It belongs to the multi antimicrobial extrusion (MATE) (TC 2.A.66.1) family. Highly expressed in inflorescence tissues, especially in floral epidermal guard cells including those of the anthers, stigma, siliques and nectaries. Also detected in the meristematic zone of the root apex and in the elongation zone through to the fully expanded cells of the differentiation zone.

The protein resides in the vacuole membrane. Functionally, multidrug and toxin efflux transporter involved in flavonoid metabolism. Required for proper reproductive development. This is Protein DETOXIFICATION 35 from Arabidopsis thaliana (Mouse-ear cress).